The sequence spans 238 residues: Probable transcriptional regulatory protein SUB0364 (238 aa).

The protein belongs to the TACO1 family. YeeN subfamily.

Its subcellular location is the cytoplasm. This chain is Probable transcriptional regulatory protein SUB0364, found in Streptococcus uberis (strain ATCC BAA-854 / 0140J).